A 411-amino-acid chain; its full sequence is MYHRHSAPPPPGRSRGYPPPQQQWPPQPYQYLPYPPQGPPPAHTFPPPAHRSYPSPYPTPPPHSPSPYQYPHHGHSQSWSAPALPPRPPLEAQQFGNGAPSHYRFQYSACTGRRRALLIGINYIGQPNQLRGCINDVTNMSTFLHERYGYRREDMVILTDDQKNPLSIPTKANILRAMQWLVKDAQPNDSLFLHFSGHGGRTPDLDGDEEDGYDDVIYPVDYRVAGHIVDDEMHNIMVRPLRPGVRLTVIFDSCHSGTALDLPYVYSTQGILKEPNLAKEAAQDLFSAISSYGKGDLSGVAMTAIGFLKKAAKGDSARKRTVMTKTSPADVVMFSGSKDTQTSADTFQDGEARGALSWAFIKSLRQWPNQSYLQLLNSIRAQLEGKYTQKPQLSCSHPLGAWVMRAIEEPA.

A disordered region spans residues 1 to 97 (MYHRHSAPPP…PPLEAQQFGN (97 aa)). Pro residues predominate over residues 7-65 (APPPPGRSRGYPPPQQQWPPQPYQYLPYPPQGPPPAHTFPPPAHRSYPSPYPTPPPHSP). Residues H198 and C254 contribute to the active site.

Belongs to the peptidase C14B family.

Involved in cell death (apoptosis). This is Metacaspase-1B (casB) from Neosartorya fischeri (strain ATCC 1020 / DSM 3700 / CBS 544.65 / FGSC A1164 / JCM 1740 / NRRL 181 / WB 181) (Aspergillus fischerianus).